A 219-amino-acid chain; its full sequence is Probable nicotinate-nucleotide adenylyltransferase (219 aa).

This sequence belongs to the NadD family.

It carries out the reaction nicotinate beta-D-ribonucleotide + ATP + H(+) = deamido-NAD(+) + diphosphate. It functions in the pathway cofactor biosynthesis; NAD(+) biosynthesis; deamido-NAD(+) from nicotinate D-ribonucleotide: step 1/1. Its function is as follows. Catalyzes the reversible adenylation of nicotinate mononucleotide (NaMN) to nicotinic acid adenine dinucleotide (NaAD). The protein is Probable nicotinate-nucleotide adenylyltransferase of Enterococcus faecalis (strain ATCC 700802 / V583).